A 102-amino-acid polypeptide reads, in one-letter code: Parathymosin (102 aa).

The interval methionine 1 to alanine 102 is disordered. The residue at position 2 (serine 2) is an N-acetylserine. At serine 2 the chain carries Phosphoserine. Lysine 4 carries the N6-acetyllysine modification. A phosphoserine mark is found at serine 5 and serine 13. Positions serine 13–valine 37 are enriched in basic and acidic residues. An N6-acetyllysine modification is found at lysine 15. The span at valine 38–glycine 76 shows a compositional bias: acidic residues. Threonine 52 bears the Phosphothreonine mark. Lysine 92 is subject to N6-acetyllysine.

The protein belongs to the pro/parathymosin family.

Its function is as follows. Parathymosin may mediate immune function by blocking the effect of prothymosin alpha which confers resistance to certain opportunistic infections. The sequence is that of Parathymosin (PTMS) from Homo sapiens (Human).